We begin with the raw amino-acid sequence, 130 residues long: Small ribosomal subunit protein uS9 (130 aa).

The protein belongs to the universal ribosomal protein uS9 family.

This is Small ribosomal subunit protein uS9 from Nitratidesulfovibrio vulgaris (strain ATCC 29579 / DSM 644 / CCUG 34227 / NCIMB 8303 / VKM B-1760 / Hildenborough) (Desulfovibrio vulgaris).